Reading from the N-terminus, the 136-residue chain is Acyl carrier protein 2, chloroplastic (136 aa).

A chloroplast-targeting transit peptide spans 1 to 51 (MASIAASASISLQARPRQLAIAASQVKSFSNGRRSSLSFNLRQLPTRLTVS). The 76-residue stretch at 56-131 (PETVDKVCAV…QAAALIEELL (76 aa)) folds into the Carrier domain. Residue S91 is modified to O-(pantetheine 4'-phosphoryl)serine.

Belongs to the acyl carrier protein (ACP) family. 4'-phosphopantetheine is transferred from CoA to a specific serine of apo-ACP by acpS. This modification is essential for activity because fatty acids are bound in thioester linkage to the sulfhydryl of the prosthetic group.

It is found in the plastid. The protein localises to the chloroplast. Its function is as follows. Carrier of the growing fatty acid chain in fatty acid biosynthesis. The sequence is that of Acyl carrier protein 2, chloroplastic (ACP2) from Arabidopsis thaliana (Mouse-ear cress).